The sequence spans 882 residues: Leucine--tRNA ligase (882 aa).

The short motif at 43–53 (PYPSGRIHMGH) is the 'HIGH' region element. Residues 634–638 (KMSKS) carry the 'KMSKS' region motif. Residue Lys637 participates in ATP binding.

It belongs to the class-I aminoacyl-tRNA synthetase family.

The protein localises to the cytoplasm. The catalysed reaction is tRNA(Leu) + L-leucine + ATP = L-leucyl-tRNA(Leu) + AMP + diphosphate. This is Leucine--tRNA ligase from Rhodopseudomonas palustris (strain BisB18).